The sequence spans 356 residues: Protein-glutamate methylesterase/protein-glutamine glutaminase (356 aa).

Residues 4 to 121 (KVLIVDDSAL…QSGMLEYTDL (118 aa)) form the Response regulatory domain. D55 is modified (4-aspartylphosphate). The CheB-type methylesterase domain maps to 156-349 (PLTSSEKLII…RRVLEFFAAH (194 aa)). Catalysis depends on residues S169, H195, and D291.

Belongs to the CheB family. Phosphorylated by CheA. Phosphorylation of the N-terminal regulatory domain activates the methylesterase activity.

The protein localises to the cytoplasm. The catalysed reaction is [protein]-L-glutamate 5-O-methyl ester + H2O = L-glutamyl-[protein] + methanol + H(+). It carries out the reaction L-glutaminyl-[protein] + H2O = L-glutamyl-[protein] + NH4(+). In terms of biological role, involved in chemotaxis. Part of a chemotaxis signal transduction system that modulates chemotaxis in response to various stimuli. Catalyzes the demethylation of specific methylglutamate residues introduced into the chemoreceptors (methyl-accepting chemotaxis proteins or MCP) by CheR. Also mediates the irreversible deamidation of specific glutamine residues to glutamic acid. The chain is Protein-glutamate methylesterase/protein-glutamine glutaminase from Thiobacillus denitrificans (strain ATCC 25259 / T1).